The chain runs to 488 residues: 3-octaprenyl-4-hydroxybenzoate carboxy-lyase (488 aa).

A Mn(2+)-binding site is contributed by N172. Prenylated FMN contacts are provided by residues 175–177 (IYR), 189–191 (RWL), and 194–195 (RG). E238 lines the Mn(2+) pocket. D287 acts as the Proton donor in catalysis.

The protein belongs to the UbiD family. As to quaternary structure, homohexamer. The cofactor is prenylated FMN. Mn(2+) is required as a cofactor.

It is found in the cell membrane. The enzyme catalyses a 4-hydroxy-3-(all-trans-polyprenyl)benzoate + H(+) = a 2-(all-trans-polyprenyl)phenol + CO2. It functions in the pathway cofactor biosynthesis; ubiquinone biosynthesis. Functionally, catalyzes the decarboxylation of 3-octaprenyl-4-hydroxy benzoate to 2-octaprenylphenol, an intermediate step in ubiquinone biosynthesis. The chain is 3-octaprenyl-4-hydroxybenzoate carboxy-lyase from Legionella pneumophila (strain Lens).